We begin with the raw amino-acid sequence, 1183 residues long: Chromosome partition protein Smc (1183 aa).

32–39 serves as a coordination point for ATP; the sequence is PNGCGKTN. Coiled coils occupy residues 167–322 and 358–497; these read ITRY…ERLN and AEFE…ALCN. The tract at residues 409–442 is disordered; sequence KEHLEGSVNRLDQRKRDLERSMEQAEPERRRTSE. The span at 419–442 shows a compositional bias: basic and acidic residues; it reads LDQRKRDLERSMEQAEPERRRTSE. The SMC hinge domain occupies 523-632; the sequence is LGCLSDLISV…VADLDAAEQL (110 aa). Coiled-coil stretches lie at residues 669–941 and 980–1025; these read GKKA…VMER and NELA…ALEK.

It belongs to the SMC family. As to quaternary structure, homodimer.

The protein localises to the cytoplasm. In terms of biological role, required for chromosome condensation and partitioning. In Chlorobaculum tepidum (strain ATCC 49652 / DSM 12025 / NBRC 103806 / TLS) (Chlorobium tepidum), this protein is Chromosome partition protein Smc.